We begin with the raw amino-acid sequence, 1008 residues long: MLLVLDLGISSLVLVVSLVLPLIGLFVRHKWRVAAQRREEIRRLLIHASEEAARAELEASVEFSSVAVSNVFHCPVCYCLATTRCSRCKAVRYCSGKCQIIHWRQGHKDECHPASIVYDSEDESDSDLRLGEENGQNTPEETLLVGPEPVTIPIGESLLSNRARSPEDGNGDIADNKDDLIDKEEAVSVAETSGSSFSGFSSSPRNDSGDEISRCESFSSSESERSESLLDAHVSVEPEDTCFSTIEDAPSKLLSPKFVHLVESVDNLANLPKLSVHKPEDDAGQNQSQSRSLHSLVTDRHPVSADPSLKSSDFWGTALGSAERVSDSCVKSKSGRPGNSSLHFSFGSGSSRDTSAAKVSEQRSSILKEAPRGTGYISDGVNLRERNAKRFDEAEIALPISSSTDALSPLDSSNLSHVTLPKSKSASSENGSMLAPLKVGEVQLLASKASNTKKCADLMKHSPLGAKSVRVLDHQKQNGAVVQHINSLHGRSGLKASVLKVVDQWTRPKSENEMAGRHGHKGLFPYEVFAKLYTYKIEFQPCGLINVGNSCFANVVFQCLMFTPPLTTYFLQQFHSRACTKKEQCFTCGFEKLVVKAKEEKSPLSPNGLLSQLQNIGIFLGNGKEEDAHEFLRFVVDTMQSVCIKASEYDMTKSSKLEDTTLIGLTFGGYLRSKIKCMKCQVKSELREKMMDLTVEIDGDISTLDDALRRFTRTEILDGENKYRCGSCKSYERAKKKLKITEPPNVLTIALKRFQAGKFGKLNKLIRFPETLDLAPYVSGGSEKSHDYKLYGVIVHLDVMNAAFSGHYVCYIRNQNKWYKADDSTVVTSDVERILTKGAYMLFYARCTPTPPRLAVCTKTEASNKKSRVPLPKANEKSTISRSVSTSSPELSSNTPGGGRSGNIQSFYSSFQRLQKILEEDSASDSSSLFDSNSDECSCSTDSTSMDDFADFIFGDHQGRAHGQSETPSPTSSSSSSSPPFTRRSPLSRSSPETYGTSRHQLPLGGER.

The chain crosses the membrane as a helical span at residues 7–27; the sequence is LGISSLVLVVSLVLPLIGLFV. 8 residues coordinate Zn(2+): C74, C77, C85, C88, C94, C98, H107, and C111. An MYND-type zinc finger spans residues 74-111; that stretch reads CPVCYCLATTRCSRCKAVRYCSGKCQIIHWRQGHKDEC. 5 disordered regions span residues 122–149, 159–178, 187–233, 275–309, and 326–379; these read DESDSDLRLGEENGQNTPEETLLVGPEP, LSNRARSPEDGNGDIADNKD, VSVA…LDAH, SVHKPEDDAGQNQSQSRSLHSLVTDRHPVSADPSL, and SDSC…YISD. Low complexity predominate over residues 193-203; that stretch reads SGSSFSGFSSS. A compositionally biased stretch (basic and acidic residues) spans 222–233; sequence ESERSESLLDAH. Residues 284–295 show a composition bias toward polar residues; it reads GQNQSQSRSLHS. Positions 340-351 are enriched in low complexity; sequence SSLHFSFGSGSS. The 306-residue stretch at 542–847 folds into the USP domain; that stretch reads CGLINVGNSC…GAYMLFYARC (306 aa). The active-site Nucleophile is C551. The active-site Proton acceptor is the H807. Disordered regions lie at residues 859–905 and 952–1008; these read KTEA…GNIQ and FIFG…GGER. 2 stretches are compositionally biased toward low complexity: residues 878 to 888 and 965 to 992; these read STISRSVSTSS and SETPSPTSSSSSSSPPFTRRSPLSRSSP.

Belongs to the peptidase C19 family. Interacts with SHM1 and SHM4. Interacts with HIPP27. In terms of tissue distribution, expressed in flowers, siliques, rosette leaves, cauline leaves, stems and at a lower level in roots. In roots, expressed in the sieve elements.

The protein localises to the membrane. The catalysed reaction is Thiol-dependent hydrolysis of ester, thioester, amide, peptide and isopeptide bonds formed by the C-terminal Gly of ubiquitin (a 76-residue protein attached to proteins as an intracellular targeting signal).. Its function is as follows. Recognizes and hydrolyzes the peptide bond at the C-terminal Gly of ubiquitin. Involved in the processing of poly-ubiquitin precursors as well as that of ubiquitinated proteins. Involved in salt tolerance by modulating sodium transport activity and repressing cell death at least partially through modulating SHM1 stability and activity. Involved in cadmium tolerance by interacting with HIPP27 and probably modulating its stability. The polypeptide is Ubiquitin carboxyl-terminal hydrolase 16 (UBP16) (Arabidopsis thaliana (Mouse-ear cress)).